A 418-amino-acid polypeptide reads, in one-letter code: GTPase Obg (418 aa).

The Obg domain occupies 1 to 156 (MKFIDEITLN…KKLTLVLKVL (156 aa)). One can recognise an OBG-type G domain in the interval 157–324 (ADVGFVGKPS…LKEALWQSVK (168 aa)). Residues 163–170 (GKPSAGKS), 188–192 (FTTLV), 209–212 (DLPG), 278–281 (NKKD), and 305–307 (SAL) each bind GTP. The Mg(2+) site is built by serine 170 and threonine 190. Residues 339 to 417 (VFINFEADFN…IYDYEFVWGN (79 aa)) enclose the OCT domain.

It belongs to the TRAFAC class OBG-HflX-like GTPase superfamily. OBG GTPase family. As to quaternary structure, monomer. Mg(2+) is required as a cofactor.

The protein resides in the cytoplasm. Its function is as follows. An essential GTPase which binds GTP, GDP and possibly (p)ppGpp with moderate affinity, with high nucleotide exchange rates and a fairly low GTP hydrolysis rate. Plays a role in control of the cell cycle, stress response, ribosome biogenesis and in those bacteria that undergo differentiation, in morphogenesis control. This is GTPase Obg from Mycoplasmopsis pulmonis (strain UAB CTIP) (Mycoplasma pulmonis).